A 233-amino-acid chain; its full sequence is C-type lectin domain family 2 member D2 (233 aa).

The disordered stretch occupies residues 1–34; the sequence is MPSSAHLQDAPPLLSRTLTQDEEQTSLRQSSSCG. Over 1–76 the chain is Cytoplasmic; the sequence is MPSSAHLQDA…SPESPAKLPC (76 aa). Residues 77 to 97 traverse the membrane as a helical; Signal-anchor for type II membrane protein segment; it reads CYGVIMVLSVAVVALSVALSV. At 98–233 the chain is on the extracellular side; it reads KKTPQILTVK…KPNSYTSQCQ (136 aa). Positions 119 to 228 constitute a C-type lectin domain; the sequence is VGNKCYYFNE…KSICSKPNSY (110 aa). A glycan (N-linked (GlcNAc...) asparagine) is linked at N132.

It is found in the cell membrane. In terms of biological role, lectin-type cell surface receptor. The polypeptide is C-type lectin domain family 2 member D2 (Clec2d2) (Rattus norvegicus (Rat)).